Here is a 60-residue protein sequence, read N- to C-terminus: Protein CADMIUM TOLERANCE 4 (60 aa).

The helical transmembrane segment at 26 to 42 threads the bilayer; that stretch reads GFLYACLFMLCCCFCCY.

It belongs to the CYSTM1 family. Mainly expressed in shoots, and, to a lower extent, in roots.

It is found in the cell membrane. The protein localises to the secreted. Its subcellular location is the cell wall. In terms of biological role, confers resistance to heavy metal ions (e.g. aluminium (Al)) by chelating them at the plasma membrane of root cells, thus stopping their entry and reducing their accumulation. The protein is Protein CADMIUM TOLERANCE 4 of Oryza sativa subsp. japonica (Rice).